The chain runs to 319 residues: Acetyl-coenzyme A carboxylase carboxyl transferase subunit alpha (319 aa).

Residues 35 to 296 (NIDEEVHRLR…KAQLLADLAD (262 aa)) enclose the CoA carboxyltransferase C-terminal domain.

The protein belongs to the AccA family. As to quaternary structure, acetyl-CoA carboxylase is a heterohexamer composed of biotin carboxyl carrier protein (AccB), biotin carboxylase (AccC) and two subunits each of ACCase subunit alpha (AccA) and ACCase subunit beta (AccD).

The protein localises to the cytoplasm. It carries out the reaction N(6)-carboxybiotinyl-L-lysyl-[protein] + acetyl-CoA = N(6)-biotinyl-L-lysyl-[protein] + malonyl-CoA. It functions in the pathway lipid metabolism; malonyl-CoA biosynthesis; malonyl-CoA from acetyl-CoA: step 1/1. In terms of biological role, component of the acetyl coenzyme A carboxylase (ACC) complex. First, biotin carboxylase catalyzes the carboxylation of biotin on its carrier protein (BCCP) and then the CO(2) group is transferred by the carboxyltransferase to acetyl-CoA to form malonyl-CoA. This chain is Acetyl-coenzyme A carboxylase carboxyl transferase subunit alpha, found in Shigella boydii serotype 4 (strain Sb227).